Reading from the N-terminus, the 100-residue chain is Small ribosomal subunit protein uS14c (100 aa).

It belongs to the universal ribosomal protein uS14 family. Part of the 30S ribosomal subunit.

It localises to the plastid. Its subcellular location is the cyanelle. In terms of biological role, binds 16S rRNA, required for the assembly of 30S particles. The chain is Small ribosomal subunit protein uS14c from Cyanophora paradoxa.